The sequence spans 813 residues: Palmitoyltransferase AKR1 (813 aa).

The segment at 1-83 (MAKKKSKSKS…PVTTSNETDP (83 aa)) is disordered. Residues 1 to 387 (MAKKKSKSKS…KPWVSAKLGK (387 aa)) lie on the Cytoplasmic side of the membrane. Over residues 9–24 (KSSSPKPKVSSTAAKP) the composition is skewed to low complexity. Positions 28-46 (DNQQNIENVQDSPSALQQQ) are enriched in polar residues. Over residues 47 to 78 (SATAEESENTATTATPSEGTTATTESSPVTTS) the composition is skewed to low complexity. 6 ANK repeats span residues 133-162 (PTLAKYMRSCQEGNLTIVKELISSGQVLVN), 167-196 (DEITGLHWACINNRLSLVKFLIANGANPNQ), 201-231 (LKASPLHWACRNGLVYIVDYLMRNSDADPNL), 235-264 (QTYNALHLAVHSSNIMLVIYLLLSCCSTDS), 276-305 (SNRTALHWASYQNDIFTINALLRFGADVSK), and 309-338 (SLFIPLHWAFMKGYKSVLKALVEAGSDIYF). Residues 388-408 (IITFLTPYFLLPLSFNVLSMG) traverse the membrane as a helical segment. At 409-412 (GDQG) the chain is on the lumenal side. Residues 413–433 (GFIIPKLILAIGILGGGIYLL) traverse the membrane as a helical segment. The Cytoplasmic segment spans residues 434–452 (NKLIISQYIFDDKKLAKSP). A helical transmembrane segment spans residues 453–473 (ILAGVFSATAFWSVLVWLYNI). Residues 474–485 (LPTTFIHNFFAN) are Lumenal-facing. Residues 486 to 506 (VIMAILIAIFTWSFFKAMFIN) form a helical membrane-spanning segment. At 507–579 (PGFVPTPADN…YNDIGVRNHK (73 aa)) the chain is on the cytoplasmic side. A DHHC domain is found at 536–586 (HFCVNSFVRKPLRSRYSKHNKRLIARFDHSCPWVYNDIGVRNHKIFITFVY). C566 functions as the S-palmitoyl cysteine intermediate in the catalytic mechanism. The chain crosses the membrane as a helical span at residues 580–600 (IFITFVYSLNMAIFVFLYLSL). The Lumenal segment spans residues 601–642 (QYFDKVKDQYDSDDEGEGEGFVCSILGDDMCYGYKNHHFHFN). A helical transmembrane segment spans residues 643–663 (VFMWDLFQCVWVSFLCIVQTF). Residues 664–813 (QILKGLTTWE…VDYYTLYSYH (150 aa)) lie on the Cytoplasmic side of the membrane.

It belongs to the DHHC palmitoyltransferase family. AKR/ZDHHC17 subfamily.

The protein localises to the early endosome membrane. It localises to the golgi apparatus membrane. The catalysed reaction is L-cysteinyl-[protein] + hexadecanoyl-CoA = S-hexadecanoyl-L-cysteinyl-[protein] + CoA. In terms of biological role, palmitoyltransferase specific for casein kinase 1. The protein is Palmitoyltransferase AKR1 (AKR1) of Candida albicans (strain SC5314 / ATCC MYA-2876) (Yeast).